The chain runs to 241 residues: Probable transcriptional regulatory protein LMOf2365_1554 (241 aa).

Positions 1 to 14 are enriched in polar residues; the sequence is MSGHSKWNNIQGRK. The disordered stretch occupies residues 1-22; sequence MSGHSKWNNIQGRKNAQDSKRS.

The protein belongs to the TACO1 family.

It is found in the cytoplasm. The sequence is that of Probable transcriptional regulatory protein LMOf2365_1554 from Listeria monocytogenes serotype 4b (strain F2365).